A 309-amino-acid chain; its full sequence is Elongation factor Ts (309 aa).

Residues 82 to 85 form an involved in Mg(2+) ion dislocation from EF-Tu region; that stretch reads TDFV.

This sequence belongs to the EF-Ts family.

It is found in the cytoplasm. In terms of biological role, associates with the EF-Tu.GDP complex and induces the exchange of GDP to GTP. It remains bound to the aminoacyl-tRNA.EF-Tu.GTP complex up to the GTP hydrolysis stage on the ribosome. This chain is Elongation factor Ts (tsf), found in Rickettsia prowazekii (strain Madrid E).